The chain runs to 212 residues: Phosphatidylserine decarboxylase proenzyme (212 aa).

The active-site Schiff-base intermediate with substrate; via pyruvic acid is S182. Residue S182 is modified to Pyruvic acid (Ser); by autocatalysis.

This sequence belongs to the phosphatidylserine decarboxylase family. PSD-A subfamily. As to quaternary structure, heterodimer of a large membrane-associated beta subunit and a small pyruvoyl-containing alpha subunit. Requires pyruvate as cofactor. Post-translationally, is synthesized initially as an inactive proenzyme. Formation of the active enzyme involves a self-maturation process in which the active site pyruvoyl group is generated from an internal serine residue via an autocatalytic post-translational modification. Two non-identical subunits are generated from the proenzyme in this reaction, and the pyruvate is formed at the N-terminus of the alpha chain, which is derived from the carboxyl end of the proenzyme. The post-translation cleavage follows an unusual pathway, termed non-hydrolytic serinolysis, in which the side chain hydroxyl group of the serine supplies its oxygen atom to form the C-terminus of the beta chain, while the remainder of the serine residue undergoes an oxidative deamination to produce ammonia and the pyruvoyl prosthetic group on the alpha chain.

The protein localises to the cell membrane. The catalysed reaction is a 1,2-diacyl-sn-glycero-3-phospho-L-serine + H(+) = a 1,2-diacyl-sn-glycero-3-phosphoethanolamine + CO2. Its pathway is phospholipid metabolism; phosphatidylethanolamine biosynthesis; phosphatidylethanolamine from CDP-diacylglycerol: step 2/2. Functionally, catalyzes the formation of phosphatidylethanolamine (PtdEtn) from phosphatidylserine (PtdSer). The polypeptide is Phosphatidylserine decarboxylase proenzyme (Paraburkholderia xenovorans (strain LB400)).